The following is a 231-amino-acid chain: Small ribosomal subunit protein uS3 (231 aa).

The region spanning V17 to Q86 is the KH type-2 domain.

Belongs to the universal ribosomal protein uS3 family. In terms of assembly, part of the 30S ribosomal subunit.

Functionally, binds the lower part of the 30S subunit head. This Methanoregula boonei (strain DSM 21154 / JCM 14090 / 6A8) protein is Small ribosomal subunit protein uS3.